The primary structure comprises 250 residues: Aminoglycoside 3'-phosphotransferase (250 aa).

The active-site Proton acceptor is the Asp-178.

It belongs to the aminoglycoside phosphotransferase family.

The catalysed reaction is kanamycin A + ATP = kanamycin 3'-phosphate + ADP + H(+). Its function is as follows. Resistance to kanamycin and structurally-related aminoglycosides, including amikacin. This is Aminoglycoside 3'-phosphotransferase (aphA-7) from Campylobacter jejuni.